The primary structure comprises 138 residues: Small ribosomal subunit protein uS11c (138 aa).

A disordered region spans residues Met-1–Ile-25. The segment covering Gly-9–Ile-25 has biased composition (basic residues).

This sequence belongs to the universal ribosomal protein uS11 family. Part of the 30S ribosomal subunit.

Its subcellular location is the plastid. It localises to the chloroplast. This Eucalyptus globulus subsp. globulus (Tasmanian blue gum) protein is Small ribosomal subunit protein uS11c.